The chain runs to 617 residues: V-type proton ATPase catalytic subunit A (617 aa).

257–264 provides a ligand contact to ATP; the sequence is GAFGCGKT.

The protein belongs to the ATPase alpha/beta chains family. In terms of assembly, V-ATPase is a heteromultimeric enzyme composed of a peripheral catalytic V1 complex (components A to H) attached to an integral membrane V0 proton pore complex (components: a, c, c', c'', d, e, f and VOA1). Post-translationally, is a probable target for sumoylation.

The protein resides in the vacuole membrane. It catalyses the reaction ATP + H2O + 4 H(+)(in) = ADP + phosphate + 5 H(+)(out). Its function is as follows. Catalytic subunit of the V1 complex of vacuolar(H+)-ATPase (V-ATPase), a multisubunit enzyme composed of a peripheral complex (V1) that hydrolyzes ATP and a membrane integral complex (V0) that translocates protons. V-ATPase is responsible for acidifying and maintaining the pH of intracellular compartments. Mediates oxidative stress response, filamentous growth, and plays an important role in virulence. This chain is V-type proton ATPase catalytic subunit A, found in Candida albicans (strain SC5314 / ATCC MYA-2876) (Yeast).